Here is a 324-residue protein sequence, read N- to C-terminus: tRNA-cytidine(32) 2-sulfurtransferase (324 aa).

Residues 1–26 form a disordered region; sequence MQDLIDSPTAARTPAEEKIRHEGNKL. The span at 14 to 26 shows a compositional bias: basic and acidic residues; sequence PAEEKIRHEGNKL. Positions 55 to 60 match the PP-loop motif motif; that stretch reads SGGKDS. Residues cysteine 130, cysteine 133, and cysteine 221 each contribute to the [4Fe-4S] cluster site. The segment at 278-310 is disordered; sequence RPDANGDTAFDPIDPEDPREDAGDACASSPADG.

It belongs to the TtcA family. Homodimer. Mg(2+) is required as a cofactor. The cofactor is [4Fe-4S] cluster.

The protein resides in the cytoplasm. The enzyme catalyses cytidine(32) in tRNA + S-sulfanyl-L-cysteinyl-[cysteine desulfurase] + AH2 + ATP = 2-thiocytidine(32) in tRNA + L-cysteinyl-[cysteine desulfurase] + A + AMP + diphosphate + H(+). The protein operates within tRNA modification. Its function is as follows. Catalyzes the ATP-dependent 2-thiolation of cytidine in position 32 of tRNA, to form 2-thiocytidine (s(2)C32). The sulfur atoms are provided by the cysteine/cysteine desulfurase (IscS) system. The sequence is that of tRNA-cytidine(32) 2-sulfurtransferase from Bordetella petrii (strain ATCC BAA-461 / DSM 12804 / CCUG 43448).